The following is a 459-amino-acid chain: Elongation factor 1-alpha (459 aa).

N,N,N-trimethylglycine is present on Gly2. Lys3 is modified (N6,N6-dimethyllysine; alternate). Residue Lys3 is modified to N6-methyllysine; alternate. The tr-type G domain maps to 5–240 (KTHVNVVVIG…DAVDPPTRPS (236 aa)). The segment at 14-21 (GHVDSGKS) is G1. Position 14–21 (14–21 (GHVDSGKS)) interacts with GTP. Lys30 is subject to N6-methyllysine. The G2 stretch occupies residues 70 to 74 (VITID). Residue Lys79 is modified to N6,N6,N6-trimethyllysine. Residues 91-94 (DAPG) form a G3 region. GTP is bound by residues 91 to 95 (DAPGH) and 153 to 156 (NKMD). Positions 153-156 (NKMD) are G4. The tract at residues 192-194 (SGW) is G5. Residue Lys316 is modified to N6,N6-dimethyllysine; alternate. N6-methyllysine; alternate is present on Lys316. Lys390 is subject to N6-methyllysine.

This sequence belongs to the TRAFAC class translation factor GTPase superfamily. Classic translation factor GTPase family. EF-Tu/EF-1A subfamily.

It is found in the cytoplasm. This protein promotes the GTP-dependent binding of aminoacyl-tRNA to the A-site of ribosomes during protein biosynthesis. This Blastobotrys adeninivorans (Yeast) protein is Elongation factor 1-alpha (TEF).